The sequence spans 503 residues: Probable cytosol aminopeptidase (503 aa).

Residues Lys-270 and Asp-275 each contribute to the Mn(2+) site. Lys-282 is a catalytic residue. Mn(2+) contacts are provided by Asp-293, Asp-352, and Glu-354. The active site involves Arg-356.

This sequence belongs to the peptidase M17 family. Requires Mn(2+) as cofactor.

It localises to the cytoplasm. It catalyses the reaction Release of an N-terminal amino acid, Xaa-|-Yaa-, in which Xaa is preferably Leu, but may be other amino acids including Pro although not Arg or Lys, and Yaa may be Pro. Amino acid amides and methyl esters are also readily hydrolyzed, but rates on arylamides are exceedingly low.. The catalysed reaction is Release of an N-terminal amino acid, preferentially leucine, but not glutamic or aspartic acids.. In terms of biological role, presumably involved in the processing and regular turnover of intracellular proteins. Catalyzes the removal of unsubstituted N-terminal amino acids from various peptides. This chain is Probable cytosol aminopeptidase, found in Citrobacter koseri (strain ATCC BAA-895 / CDC 4225-83 / SGSC4696).